The chain runs to 177 residues: Large ribosomal subunit protein uL6 (177 aa).

Belongs to the universal ribosomal protein uL6 family. Part of the 50S ribosomal subunit.

This protein binds to the 23S rRNA, and is important in its secondary structure. It is located near the subunit interface in the base of the L7/L12 stalk, and near the tRNA binding site of the peptidyltransferase center. This chain is Large ribosomal subunit protein uL6, found in Chelativorans sp. (strain BNC1).